Consider the following 64-residue polypeptide: Large ribosomal subunit protein bL28 (64 aa).

This sequence belongs to the bacterial ribosomal protein bL28 family.

The chain is Large ribosomal subunit protein bL28 from Elusimicrobium minutum (strain Pei191).